Reading from the N-terminus, the 124-residue chain is MKKEQFYPLGIFLAAMLGGLVRYLVSTWLPASPDFPWGTLFVNYLGIFCLIYLVKGYLVYKGTSKGLILALGTGFCGGLTTFSSLMLDTVKLLDTGRYLSLILYLLLSIGGGLLLAYYLGRKKW.

4 helical membrane-spanning segments follow: residues 9–29, 34–54, 67–87, and 99–119; these read LGIFLAAMLGGLVRYLVSTWL, DFPWGTLFVNYLGIFCLIYLV, LILALGTGFCGGLTTFSSLML, and LSLILYLLLSIGGGLLLAYYL. Residues glycine 77 and threonine 80 each coordinate Na(+).

This sequence belongs to the fluoride channel Fluc/FEX (TC 1.A.43) family.

It is found in the cell membrane. The catalysed reaction is fluoride(in) = fluoride(out). Its activity is regulated as follows. Na(+) is not transported, but it plays an essential structural role and its presence is essential for fluoride channel function. In terms of biological role, fluoride-specific ion channel. Important for reducing fluoride concentration in the cell, thus reducing its toxicity. This chain is Fluoride-specific ion channel FluC 2, found in Streptococcus pneumoniae serotype 4 (strain ATCC BAA-334 / TIGR4).